Here is a 211-residue protein sequence, read N- to C-terminus: Large ribosomal subunit protein uL4 (211 aa).

The interval alanine 42–glycine 87 is disordered. Positions glycine 60–glycine 71 are enriched in basic residues.

It belongs to the universal ribosomal protein uL4 family. Part of the 50S ribosomal subunit.

Its function is as follows. One of the primary rRNA binding proteins, this protein initially binds near the 5'-end of the 23S rRNA. It is important during the early stages of 50S assembly. It makes multiple contacts with different domains of the 23S rRNA in the assembled 50S subunit and ribosome. Functionally, forms part of the polypeptide exit tunnel. This Synechococcus sp. (strain CC9902) protein is Large ribosomal subunit protein uL4.